Reading from the N-terminus, the 585-residue chain is Frizzled-5 (585 aa).

Positions 1-26 (MARPDPSAPPSLLLLLLAQLVGRAAA) are cleaved as a signal peptide. The Extracellular segment spans residues 27-238 (ASKAPVCQEI…PDERTFATFW (212 aa)). In terms of domain architecture, FZ spans 28–150 (SKAPVCQEIT…GDAEVLCMDY (123 aa)). Disulfide bonds link C33–C94, C41–C87, C78–C116, C105–C147, and C109–C133. A glycan (N-linked (GlcNAc...) asparagine) is linked at N47. The N-linked (GlcNAc...) asparagine glycan is linked to N151. The tract at residues 156–182 (TTASPKSFPAKPTLPGPPGAPSSGGEC) is disordered. Residues 239-259 (IGLWSVLCFISTSTTVATFLI) form a helical membrane-spanning segment. The Cytoplasmic portion of the chain corresponds to 260–270 (DMERFRYPERP). A helical transmembrane segment spans residues 271–291 (IIFLSACYLCVSLGFLVRLVV). Residues 292–315 (GHASVACSREHSHIHYETTGPALC) lie on the Extracellular side of the membrane. Residues 316 to 336 (TVVFLLVYFFGMASSIWWVIL) traverse the membrane as a helical segment. Topologically, residues 337–358 (SLTWFLAAGMKWGNEAIAGYAQ) are cytoplasmic. Residues 359–379 (YFHLAAWLIPSVKSITALALS) form a helical membrane-spanning segment. The Extracellular segment spans residues 380–402 (SVDGDPVAGICYVGNQNLNSLRG). Residues 403 to 423 (FVLGPLVLYLLVGTLFLLAGF) form a helical membrane-spanning segment. The Cytoplasmic segment spans residues 424-449 (VSLFRIRSVIKQGGTKTDKLEKLMIR). Residues 450-470 (IGIFTLLYTVPASIVVACYLY) form a helical membrane-spanning segment. Over 471–500 (EQHYRESWEAALTCACPGPDAGQPRAKPEY) the chain is Extracellular. A helical transmembrane segment spans residues 501–521 (WVLMLKYFMCLVVGITSGVWI). The Cytoplasmic portion of the chain corresponds to 522-585 (WSGKTLESWR…YHKQVSLSHV (64 aa)). Residues 582–584 (LSH) carry the PDZ-binding motif.

The protein belongs to the G-protein coupled receptor Fz/Smo family. Binding of unsaturated fatty acid molecules (via FZ domain) promotes homodimerization (via FZ domain). Interacts with WNT2B. Interacts with WNT7A. Interacts with GOPC. Post-translationally, ubiquitinated by RNF43 and ZNRF3, leading to its degradation by the proteasome. As to expression, detected in hippocampus (at protein level). Expressed in eye, kidney, lung, chondrocytes, epithelial cells of the small intestine and gobelet cells of the colon.

It is found in the cell membrane. Its subcellular location is the golgi apparatus membrane. The protein resides in the synapse. It localises to the perikaryon. The protein localises to the cell projection. It is found in the dendrite. Its subcellular location is the axon. Functionally, receptor for Wnt proteins. Functions in the canonical Wnt/beta-catenin signaling pathway. In vitro activates WNT2, WNT10B, WNT5A, but not WNT2B or WNT4 signaling. In neurons, activation by WNT7A promotes formation of synapses. May be involved in transduction and intercellular transmission of polarity information during tissue morphogenesis and/or in differentiated tissues. Plays a role in yolk sac angiogenesis and in placental vascularization. Plays a role in ocular development. This is Frizzled-5 (Fzd5) from Mus musculus (Mouse).